A 387-amino-acid polypeptide reads, in one-letter code: Flap endonuclease 1 (387 aa).

Residues 1 to 104 (MGILGLSKLI…GELAKRAERR (104 aa)) are N-domain. Aspartate 34 is a binding site for Mg(2+). Residues arginine 47 and arginine 70 each coordinate DNA. Mg(2+) contacts are provided by aspartate 86, glutamate 158, glutamate 160, aspartate 179, and aspartate 181. Residues 122–253 (GIEKFNRRLV…KRAIELINNY (132 aa)) are I-domain. Glutamate 158 lines the DNA pocket. Residues glycine 231 and aspartate 233 each coordinate DNA. A Mg(2+)-binding site is contributed by aspartate 233. An interaction with PCNA region spans residues 336–344 (TQVRLDSFF). Residues 346-387 (TLPSTPNATNAAKRKAEEAKKSANNKKAKTSGGVGGRGRRPK) form a disordered region.

It belongs to the XPG/RAD2 endonuclease family. FEN1 subfamily. In terms of assembly, interacts with PCNA. Three molecules of FEN1 bind to one PCNA trimer with each molecule binding to one PCNA monomer. PCNA stimulates the nuclease activity without altering cleavage specificity. Mg(2+) serves as cofactor. Phosphorylated. Phosphorylation upon DNA damage induces relocalization to the nuclear plasma.

The protein localises to the nucleus. Its subcellular location is the nucleolus. It localises to the nucleoplasm. It is found in the mitochondrion. Its function is as follows. Structure-specific nuclease with 5'-flap endonuclease and 5'-3' exonuclease activities involved in DNA replication and repair. During DNA replication, cleaves the 5'-overhanging flap structure that is generated by displacement synthesis when DNA polymerase encounters the 5'-end of a downstream Okazaki fragment. It enters the flap from the 5'-end and then tracks to cleave the flap base, leaving a nick for ligation. Also involved in the long patch base excision repair (LP-BER) pathway, by cleaving within the apurinic/apyrimidinic (AP) site-terminated flap. Acts as a genome stabilization factor that prevents flaps from equilibrating into structures that lead to duplications and deletions. Also possesses 5'-3' exonuclease activity on nicked or gapped double-stranded DNA, and exhibits RNase H activity. Also involved in replication and repair of rDNA and in repairing mitochondrial DNA. The protein is Flap endonuclease 1 of Drosophila erecta (Fruit fly).